A 444-amino-acid chain; its full sequence is MRQLKGRNRCNRAVRHLKIQGKMWLKNLKSGLEQIRESQVRGTRKNFLHDGSFHEAVAPVLAVAQCFCLMPVCGISAPTYRGLSFNRRSWRFWYSSLYLCSTSVDLAFSIRRVAHSVLDVRSVEPIVFHVSILIASWQFLNLAQLWPGLMRHWAAVERRLPGYTCCLQRARPARRLKLVAFVLLVVSLMEHLLSIISVVYYDFCPRRSDPVESYLLGASAQLFEVFPYSNWLAWLGKIQNVLLTFGWSYMDIFLMMLGMGLSEMLARLNRSLEQQVRQPMPEAYWTWSRTLYRSIVELIREVDDAVSGIMLISFGSNLYFICLQLLKSINTMPSSAHAVYFYFSLLFLLSRSTAVLLFVSAINDQAREPLRLLRLVPLKGYHPEVFRFAAELASDQVALTGLKFFNVTRKLFLAMAGTVATYELVLIQFHEDKKTWDCSPFNLD.

The Cytoplasmic segment spans residues 1 to 56 (MRQLKGRNRCNRAVRHLKIQGKMWLKNLKSGLEQIRESQVRGTRKNFLHDGSFHEA). A helical transmembrane segment spans residues 57-77 (VAPVLAVAQCFCLMPVCGISA). Topologically, residues 78–178 (PTYRGLSFNR…RARPARRLKL (101 aa)) are extracellular. A helical transmembrane segment spans residues 179–199 (VAFVLLVVSLMEHLLSIISVV). Topologically, residues 200-214 (YYDFCPRRSDPVESY) are cytoplasmic. A helical transmembrane segment spans residues 215 to 235 (LLGASAQLFEVFPYSNWLAWL). The Extracellular portion of the chain corresponds to 236-240 (GKIQN). A helical transmembrane segment spans residues 241–261 (VLLTFGWSYMDIFLMMLGMGL). Over 262–305 (SEMLARLNRSLEQQVRQPMPEAYWTWSRTLYRSIVELIREVDDA) the chain is Cytoplasmic. A helical membrane pass occupies residues 306 to 326 (VSGIMLISFGSNLYFICLQLL). At 327-338 (KSINTMPSSAHA) the chain is on the extracellular side. The chain crosses the membrane as a helical span at residues 339–359 (VYFYFSLLFLLSRSTAVLLFV). Residues 360–410 (SAINDQAREPLRLLRLVPLKGYHPEVFRFAAELASDQVALTGLKFFNVTRK) are Cytoplasmic-facing. Residues 411–431 (LFLAMAGTVATYELVLIQFHE) traverse the membrane as a helical segment. Residues 432–444 (DKKTWDCSPFNLD) lie on the Extracellular side of the membrane.

This sequence belongs to the insect chemoreceptor superfamily. Gustatory receptor (GR) family. Gr5a subfamily. Expressed in labellar chemosensory neurons.

The protein resides in the cell membrane. Functionally, gustatory receptor required for response to the sugar trehalose in taste neurons. Gr5a neurons selectively respond to sugars, in contrast to Gr66a cells which respond to bitter compounds. Flies are attracted to sugars and avoid bitter substances, suggesting that Gr5a neuron activity is sufficient to mediate acceptance behavior. Sugar signal transduction occurs through coupling with G-proteins such as Galpha49B and G-salpha60A. This is Gustatory receptor 5a for trehalose (Gr5a) from Drosophila melanogaster (Fruit fly).